The chain runs to 371 residues: 4-hydroxy-3-methylbut-2-en-1-yl diphosphate synthase (flavodoxin) (371 aa).

Residues Cys-270, Cys-273, Cys-305, and Glu-312 each coordinate [4Fe-4S] cluster.

It belongs to the IspG family. [4Fe-4S] cluster serves as cofactor.

It carries out the reaction (2E)-4-hydroxy-3-methylbut-2-enyl diphosphate + oxidized [flavodoxin] + H2O + 2 H(+) = 2-C-methyl-D-erythritol 2,4-cyclic diphosphate + reduced [flavodoxin]. Its pathway is isoprenoid biosynthesis; isopentenyl diphosphate biosynthesis via DXP pathway; isopentenyl diphosphate from 1-deoxy-D-xylulose 5-phosphate: step 5/6. In terms of biological role, converts 2C-methyl-D-erythritol 2,4-cyclodiphosphate (ME-2,4cPP) into 1-hydroxy-2-methyl-2-(E)-butenyl 4-diphosphate. This chain is 4-hydroxy-3-methylbut-2-en-1-yl diphosphate synthase (flavodoxin), found in Shewanella frigidimarina (strain NCIMB 400).